We begin with the raw amino-acid sequence, 685 residues long: Threonine--tRNA ligase (685 aa).

The disordered stretch occupies residues 1-28 (MTSPAPEHSAAPLRVPAGTTAGTAVREA). The 65-residue stretch at 1–65 (MTSPAPEHSA…EVDVDVEPVA (65 aa)) folds into the TGS domain. The tract at residues 262–568 (DHRKLGTELD…LTEHYAGAFP (307 aa)) is catalytic. 3 residues coordinate Zn(2+): Cys-367, His-418, and His-545.

It belongs to the class-II aminoacyl-tRNA synthetase family. Homodimer. Requires Zn(2+) as cofactor.

It localises to the cytoplasm. It carries out the reaction tRNA(Thr) + L-threonine + ATP = L-threonyl-tRNA(Thr) + AMP + diphosphate + H(+). Catalyzes the attachment of threonine to tRNA(Thr) in a two-step reaction: L-threonine is first activated by ATP to form Thr-AMP and then transferred to the acceptor end of tRNA(Thr). Also edits incorrectly charged L-seryl-tRNA(Thr). This chain is Threonine--tRNA ligase, found in Rhodococcus erythropolis (strain PR4 / NBRC 100887).